The sequence spans 454 residues: Chromosomal replication initiator protein DnaA (454 aa).

The domain I, interacts with DnaA modulators stretch occupies residues M1–I74. The interval I74 to L116 is domain II. Positions P88–F112 are disordered. Basic and acidic residues predominate over residues K101–F112. The domain III, AAA+ region stretch occupies residues R117 to A333. G161, G163, K164, and T165 together coordinate ATP. The interval T334–R454 is domain IV, binds dsDNA.

This sequence belongs to the DnaA family. As to quaternary structure, oligomerizes as a right-handed, spiral filament on DNA at oriC.

Its subcellular location is the cytoplasm. Plays an essential role in the initiation and regulation of chromosomal replication. ATP-DnaA binds to the origin of replication (oriC) to initiate formation of the DNA replication initiation complex once per cell cycle. Binds the DnaA box (a 9 base pair repeat at the origin) and separates the double-stranded (ds)DNA. Forms a right-handed helical filament on oriC DNA; dsDNA binds to the exterior of the filament while single-stranded (ss)DNA is stabiized in the filament's interior. The ATP-DnaA-oriC complex binds and stabilizes one strand of the AT-rich DNA unwinding element (DUE), permitting loading of DNA polymerase. After initiation quickly degrades to an ADP-DnaA complex that is not apt for DNA replication. Binds acidic phospholipids. The protein is Chromosomal replication initiator protein DnaA of Lactobacillus delbrueckii subsp. bulgaricus (strain ATCC 11842 / DSM 20081 / BCRC 10696 / JCM 1002 / NBRC 13953 / NCIMB 11778 / NCTC 12712 / WDCM 00102 / Lb 14).